The chain runs to 109 residues: Flagellar hook-basal body complex protein FliE (109 aa).

This sequence belongs to the FliE family.

It is found in the bacterial flagellum basal body. The chain is Flagellar hook-basal body complex protein FliE from Pseudomonas fluorescens (strain Pf0-1).